We begin with the raw amino-acid sequence, 426 residues long: Serine--tRNA ligase (426 aa).

Residue 230 to 232 (TAE) coordinates L-serine. 261–263 (RSE) provides a ligand contact to ATP. E284 contacts L-serine. Residue 348 to 351 (EISS) participates in ATP binding. S384 is an L-serine binding site.

The protein belongs to the class-II aminoacyl-tRNA synthetase family. Type-1 seryl-tRNA synthetase subfamily. As to quaternary structure, homodimer. The tRNA molecule binds across the dimer.

It localises to the cytoplasm. It carries out the reaction tRNA(Ser) + L-serine + ATP = L-seryl-tRNA(Ser) + AMP + diphosphate + H(+). The catalysed reaction is tRNA(Sec) + L-serine + ATP = L-seryl-tRNA(Sec) + AMP + diphosphate + H(+). It functions in the pathway aminoacyl-tRNA biosynthesis; selenocysteinyl-tRNA(Sec) biosynthesis; L-seryl-tRNA(Sec) from L-serine and tRNA(Sec): step 1/1. Catalyzes the attachment of serine to tRNA(Ser). Is also able to aminoacylate tRNA(Sec) with serine, to form the misacylated tRNA L-seryl-tRNA(Sec), which will be further converted into selenocysteinyl-tRNA(Sec). The sequence is that of Serine--tRNA ligase from Phenylobacterium zucineum (strain HLK1).